Reading from the N-terminus, the 188-residue chain is Adenylate kinase (188 aa).

Position 12 to 17 (12 to 17 (GVGKGT)) interacts with ATP. An NMP region spans residues 32–61 (STGDIFRSAMANHTELGDKAKSFMDAGNLV). Residues Thr-33, Arg-38, 59 to 61 (NLV), 89 to 92 (GYPR), and Gln-96 each bind AMP. Residues 130–136 (GRGREDD) are LID. Arg-131 lines the ATP pocket. 2 residues coordinate AMP: Arg-133 and Arg-144. Residue Gly-172 coordinates ATP.

The protein belongs to the adenylate kinase family. As to quaternary structure, monomer.

The protein localises to the cytoplasm. The enzyme catalyses AMP + ATP = 2 ADP. The protein operates within purine metabolism; AMP biosynthesis via salvage pathway; AMP from ADP: step 1/1. In terms of biological role, catalyzes the reversible transfer of the terminal phosphate group between ATP and AMP. Plays an important role in cellular energy homeostasis and in adenine nucleotide metabolism. In Oenococcus oeni (strain ATCC BAA-331 / PSU-1), this protein is Adenylate kinase.